We begin with the raw amino-acid sequence, 78 residues long: Pro-glucagon (78 aa).

Belongs to the glucagon family.

Its subcellular location is the secreted. Its function is as follows. Plays a key role in glucose metabolism and homeostasis. Regulates blood glucose by increasing gluconeogenesis and decreasing glycolysis. This Atractosteus spatula (Alligator gar) protein is Pro-glucagon (gcg).